A 354-amino-acid chain; its full sequence is Protein ECM8 (354 aa).

Functionally, may be involved in cell wall organization and biogenesis. The protein is Protein ECM8 (ECM8) of Saccharomyces cerevisiae (strain ATCC 204508 / S288c) (Baker's yeast).